An 832-amino-acid chain; its full sequence is Protein P (832 aa).

A terminal protein domain (TP) region spans residues 1–177 (MPLSYQHFRK…FCGSPYSWEQ (177 aa)). Residues 178 to 335 (ELQHGAESFH…YCLSHIVNLL (158 aa)) form a spacer region. The segment covering 186–206 (FHQQSSGILSRPSVGSSLQSK) has biased composition (polar residues). 2 disordered regions span residues 186 to 255 (FHQQ…GHNA) and 280 to 305 (TSEN…RSQS). Residues 210–220 (SRLGLQSQQGH) are compositionally biased toward low complexity. Residues 336–679 (EDWGPCAEHG…YLNLYPVARQ (344 aa)) form a polymerase/reverse transcriptase domain (RT) region. Residues 346 to 589 (EHHIRIPRTP…YSLNFMGYVI (244 aa)) form the Reverse transcriptase domain. 3 residues coordinate Mg(2+): D418, D540, and D541.

Belongs to the hepadnaviridae P protein family.

The enzyme catalyses DNA(n) + a 2'-deoxyribonucleoside 5'-triphosphate = DNA(n+1) + diphosphate. The catalysed reaction is Endonucleolytic cleavage to 5'-phosphomonoester.. With respect to regulation, activated by host HSP70 and HSP40 in vitro to be able to bind the epsilon loop of the pgRNA. Because deletion of the RNase H region renders the protein partly chaperone-independent, the chaperones may be needed indirectly to relieve occlusion of the RNA-binding site by this domain. Inhibited by several reverse-transcriptase inhibitors: Lamivudine, Adefovir and Entecavir. In terms of biological role, multifunctional enzyme that converts the viral RNA genome into dsDNA in viral cytoplasmic capsids. This enzyme displays a DNA polymerase activity that can copy either DNA or RNA templates, and a ribonuclease H (RNase H) activity that cleaves the RNA strand of RNA-DNA heteroduplexes in a partially processive 3'- to 5'-endonucleasic mode. Neo-synthesized pregenomic RNA (pgRNA) are encapsidated together with the P protein, and reverse-transcribed inside the nucleocapsid. Initiation of reverse-transcription occurs first by binding the epsilon loop on the pgRNA genome, and is initiated by protein priming, thereby the 5'-end of (-)DNA is covalently linked to P protein. Partial (+)DNA is synthesized from the (-)DNA template and generates the relaxed circular DNA (RC-DNA) genome. After budding and infection, the RC-DNA migrates in the nucleus, and is converted into a plasmid-like covalently closed circular DNA (cccDNA). The activity of P protein does not seem to be necessary for cccDNA generation, and is presumably released from (+)DNA by host nuclear DNA repair machinery. The sequence is that of Protein P from Hepatitis B virus genotype D subtype ayw (isolate Australia/AustKW/1991) (HBV-D).